Reading from the N-terminus, the 473-residue chain is Digalactosyldiacylglycerol synthase 2, chloroplastic (473 aa).

2 interaction with the membrane lipid bilayer regions span residues 130-148 (LTWF…YVIG) and 227-245 (QPFT…SKGY).

The protein belongs to the glycosyltransferase group 1 family. Glycosyltransferase 4 subfamily. In terms of tissue distribution, expressed in leaves, flowers and roots, but not in stems and siliques.

Its subcellular location is the plastid. It localises to the chloroplast outer membrane. It catalyses the reaction a 1,2-diacyl-3-O-(beta-D-galactosyl)-sn-glycerol + UDP-alpha-D-galactose = a 1,2-diacyl-3-O-[alpha-D-galactosyl-(1-&gt;6)-beta-D-galactosyl]-sn-glycerol + UDP + H(+). Stimulated by anionic phospholipids. Its function is as follows. Involved in the synthesis of diacylglycerol galactolipids that are specifically found in thylakoid membranes. Specific for alpha-glycosidic linkages. During phosphate shortage, involved in the biosynthesis of digalactosyldiacylglycerol (DGDG) which rescues the limitation of phospholipids. This Arabidopsis thaliana (Mouse-ear cress) protein is Digalactosyldiacylglycerol synthase 2, chloroplastic.